The chain runs to 494 residues: MTMALLGTLLLLALFGRSQGKNEELSLYHHLFDNYDPECRPVRRPEDTVTITLKVTLTNLISLNEKEETLTTSVWIGIEWQDYRLNFSKDDFAGVEILRVPSEHVWLPEIVLENNIDGQFGVAYDCNVLVYEGGSVSWLPPAIYRSTCAVEVTYFPFDWQNCSLIFRSQTYNAEEVELIFAVDDDGNAINKIDIDTAAFTENGEWAIDYCPGMIRHYEGGSTEDPGETDVIYTLIIRRKPLFYVINIIVPCVLISGLVLLAYFLPAQAGGQKCTVSINVLLAQTVFLFLIAQKIPETSLSVPLLGRYLIFVMVVATLIVMNCVIVLNVSLRTPTTHATSPRLRQILLELLPRLLGLSPPPEDPGAASPARRASSVGILLRAEELILKKPRSELVFEGQRHRHGTWTAAALCQNLGAAAPEVRCCVDAVNFVAESTRDQEATGEELSDWVRMGKALDNVCFWAALVLFSVGSTLIFLGGYFNQVPDLPYPPCIQP.

Positions 1–20 (MTMALLGTLLLLALFGRSQG) are cleaved as a signal peptide. Residues 21–239 (KNEELSLYHH…VIYTLIIRRK (219 aa)) are Extracellular-facing. Residues Asn86 and Asn161 are each glycosylated (N-linked (GlcNAc...) asparagine). Cys148 and Cys162 are joined by a disulfide. The helical transmembrane segment at 240 to 264 (PLFYVINIIVPCVLISGLVLLAYFL) threads the bilayer. Residues 265–272 (PAQAGGQK) are Cytoplasmic-facing. Residues 273 to 291 (CTVSINVLLAQTVFLFLIA) traverse the membrane as a helical segment. Over 292-306 (QKIPETSLSVPLLGR) the chain is Extracellular. Residues 307–328 (YLIFVMVVATLIVMNCVIVLNV) form a helical membrane-spanning segment. Over 329–457 (SLRTPTTHAT…WVRMGKALDN (129 aa)) the chain is Cytoplasmic. The chain crosses the membrane as a helical span at residues 458–481 (VCFWAALVLFSVGSTLIFLGGYFN). Over 482 to 494 (QVPDLPYPPCIQP) the chain is Extracellular.

The protein belongs to the ligand-gated ion channel (TC 1.A.9) family. Acetylcholine receptor (TC 1.A.9.1) subfamily. Epsilon/CHRNE sub-subfamily. Pentamer of two alpha chains, and one each of the beta, delta, and gamma (in immature muscle) or epsilon (in mature muscle) chains. The muscle heteropentamer composed of alpha-1, beta-1, delta, epsilon subunits interacts with the alpha-conotoxin ImII.

Its subcellular location is the postsynaptic cell membrane. It is found in the cell membrane. It catalyses the reaction K(+)(in) = K(+)(out). The catalysed reaction is Na(+)(in) = Na(+)(out). Functionally, after binding acetylcholine, the AChR responds by an extensive change in conformation that affects all subunits and leads to opening of an ion-conducting channel across the plasma membrane. The polypeptide is Acetylcholine receptor subunit epsilon (Chrne) (Rattus norvegicus (Rat)).